A 470-amino-acid chain; its full sequence is Box C/D snoRNA protein 1 (470 aa).

Residues 1 to 70 form a disordered region; that stretch reads MEFAAENEGK…EEGSGQRPEE (70 aa). Residue serine 25 is modified to Phosphoserine. Gly residues predominate over residues 41–51; sequence EFGGGEEGTGL. Glycyl lysine isopeptide (Lys-Gly) (interchain with G-Cter in SUMO2) cross-links involve residues lysine 79, lysine 108, lysine 118, lysine 138, lysine 143, lysine 153, lysine 162, lysine 173, lysine 183, and lysine 200. Zn(2+) is bound by residues cysteine 220, cysteine 223, cysteine 232, cysteine 235, cysteine 240, cysteine 244, histidine 248, and cysteine 254. The segment at 220 to 254 adopts an HIT-type zinc-finger fold; sequence CETCGTEEAKYRCPRCMRYSCSLPCVKKHKAELTC. A Glycyl lysine isopeptide (Lys-Gly) (interchain with G-Cter in SUMO2) cross-link involves residue lysine 459.

It belongs to the BCD1 family. Interacts with FBL, SNU13, NOP58, NUFIP1, RUVBL1, RUVBL2 and TAF9. Interacts (via HIT-type zinc finger) with the RUVBL1/RUVBL2 complex in the presence of ADP.

Required for box C/D snoRNAs accumulation involved in snoRNA processing, snoRNA transport to the nucleolus and ribosome biogenesis. This chain is Box C/D snoRNA protein 1 (ZNHIT6), found in Homo sapiens (Human).